The primary structure comprises 114 residues: Iron-sulfur cluster insertion protein ErpA (114 aa).

Residues Cys-42, Cys-106, and Cys-108 each coordinate iron-sulfur cluster.

This sequence belongs to the HesB/IscA family. As to quaternary structure, homodimer. Iron-sulfur cluster is required as a cofactor.

In terms of biological role, required for insertion of 4Fe-4S clusters for at least IspG. In Yersinia enterocolitica serotype O:8 / biotype 1B (strain NCTC 13174 / 8081), this protein is Iron-sulfur cluster insertion protein ErpA.